We begin with the raw amino-acid sequence, 784 residues long: Toll-like receptor 2 (784 aa).

An N-terminal signal peptide occupies residues 1 to 20; that stretch reads MPRALWTAWVWAVIILSTEG. Residues 21-587 are Extracellular-facing; the sequence is ASDQASSLSC…ARLSLSECHR (567 aa). Cys-30 and Cys-36 form a disulfide bridge. LRR repeat units lie at residues 54 to 77, 78 to 101, 102 to 125, 126 to 150, 151 to 175, 176 to 199, 200 to 223, 224 to 250, 251 to 278, 279 to 308, 309 to 337, 338 to 361, 362 to 388, 389 to 414, 415 to 437, 438 to 457, 458 to 478, 479 to 500, and 501 to 524; these read VKSL…RCVN, LKTL…HLRN, LEYL…SLYV, LKFL…HLPN, LRTL…GLTF, LEEL…SIQN, ISHL…IVSS, LDCF…MSTS, VKKL…YVSG, ILEV…HLGN, VETL…LTGR, VKRV…HLKS, LEYL…AWPF, LQTL…TLEN, LNNL…WPGK, MKQL…CLPQ, TLEI…ILPQ, LKEL…FLPV, and LSVM…SFQQ. N-linked (GlcNAc...) asparagine glycosylation occurs at Asn-114. An N-linked (GlcNAc...) asparagine glycan is attached at Asn-199. Cys-353 and Cys-382 are joined by a disulfide. Cys-432 and Cys-454 are disulfide-bonded. Asn-442 is a glycosylation site (N-linked (GlcNAc...) asparagine). The region spanning 525–579 is the LRRCT domain; it reads LKTLEAGGNNFICSCDFLSFTQGQQALGRVLVDWPDDYRCDSPSHVRGQRVQDAR. The chain crosses the membrane as a helical span at residues 588-608; sequence AAVVSAACCALFLLLLLTGVL. Topologically, residues 609–784 are cytoplasmic; sequence CHRFHGLWYM…WLNLRAAIRS (176 aa). Positions 639 to 782 constitute a TIR domain; it reads ICYDAFVSYS…GFWLNLRAAI (144 aa). A Glycyl lysine isopeptide (Lys-Gly) (interchain with G-Cter in ubiquitin) cross-link involves residue Lys-754. The short motif at 761–778 is the ATG16L1-binding motif element; it reads YLEWPVDETQQEGFWLNL.

Belongs to the Toll-like receptor family. Interacts with LY96, TLR1 and TLR6 (via extracellular domain). TLR2 seems to exist in heterodimers with either TLR1 or TLR6 before stimulation by the ligand. The heterodimers form bigger oligomers in response to their corresponding ligands as well as further heterotypic associations with other receptors such as CD14 and/or CD36. Binds MYD88 (via TIR domain). Interacts with TICAM1. Interacts with CNPY3. Interacts with ATG16L1. Interacts with PPP1R11. Interacts with TICAM2. Interacts with TIRAP. Post-translationally, ubiquitinated at Lys-754 by PPP1R11, leading to its degradation. Deubiquitinated by USP2. Glycosylation of Asn-442 is critical for secretion of the N-terminal ectodomain of TLR2.

The protein localises to the membrane. Its subcellular location is the cytoplasmic vesicle. It is found in the phagosome membrane. The protein resides in the membrane raft. In terms of biological role, cooperates with LY96 to mediate the innate immune response to bacterial lipoproteins and other microbial cell wall components. Cooperates with TLR1 or TLR6 to mediate the innate immune response to bacterial lipoproteins or lipopeptides. Acts via MYD88 and TRAF6, leading to NF-kappa-B activation, cytokine secretion and the inflammatory response. May also promote apoptosis in response to lipoproteins. Forms activation clusters composed of several receptors depending on the ligand, these clusters trigger signaling from the cell surface and subsequently are targeted to the Golgi in a lipid-raft dependent pathway. Forms the cluster TLR2:TLR6:CD14:CD36 in response to diacylated lipopeptides and TLR2:TLR1:CD14 in response to triacylated lipopeptides. This is Toll-like receptor 2 (TLR2) from Bos taurus (Bovine).